We begin with the raw amino-acid sequence, 1481 residues long: Structural protein ORF147 (1481 aa).

Disordered regions lie at residues 65 to 88 (AEKR…ENLE) and 1319 to 1403 (DEKL…PPIP). Composition is skewed to low complexity over residues 73–84 (KGSQKKSNSSSS), 1323–1336 (SSTV…SPKT), and 1393–1403 (SSRTTITPPIP).

It is found in the virion. The chain is Structural protein ORF147 from Noctuidae (owlet moths).